Here is a 320-residue protein sequence, read N- to C-terminus: Putative thiosulfate sulfurtransferase 2 (320 aa).

Rhodanese domains are found at residues 18-125 (HAPK…PLSS) and 154-267 (AINV…HACP). Residue C233 is the Cysteine persulfide intermediate of the active site. R238 serves as a coordination point for substrate.

It catalyses the reaction thiosulfate + hydrogen cyanide = thiocyanate + sulfite + 2 H(+). May be a sulfotransferase involved in the formation of thiosulfate. The polypeptide is Putative thiosulfate sulfurtransferase 2 (cysA2) (Mycobacterium bovis (strain ATCC BAA-935 / AF2122/97)).